A 400-amino-acid polypeptide reads, in one-letter code: MITRGEFFMIKEMYERGMSISDIARELGIDRKTVRKYIHSPNPPSKSKRKQRKSKLDPFKPYLQKRMLEDGVFNSEKLFFEIRQQGYTGGKTILKDYMKPFRETAKKKYTVRYETLPGEQMQVDWKEVGEVVIEGKKVKLSLFVATLGYSRMKYAVFTTSQDQEHLMECLIQSFKYFGGVPKKVLFDNMKTVTDGREQGVVKWNQRFSEFASYYGFIPKVCRPYRAQTKGKVERAIQYIMDHFYVGTAFESIEELNFLLHRWLDQVANRKPNATTGISPQERWAEESLKPLPLKDYDTSYLSYRKVHWDGSFSYKGEQWLLSAEYAGKEILVKERLNGDIRLYFRGEEISHVDQQKKVISFAEKIKKKQTEMAATISPVSVEVDTRPLSVYDAFLRGESS.

Residues 5 to 67 (GEFFMIKEMY…PFKPYLQKRM (63 aa)) form the HTH IS21-type domain. Residues 20–39 (ISDIARELGIDRKTVRKYIH) constitute a DNA-binding region (H-T-H motif). A disordered region spans residues 35–55 (RKYIHSPNPPSKSKRKQRKSK). One can recognise an Integrase catalytic domain in the interval 113–287 (YETLPGEQMQ…SPQERWAEES (175 aa)).

This sequence belongs to the transposase IS21/IS408/IS1162 family.

Functionally, involved in the transposition of the insertion sequence. This Geobacillus stearothermophilus (Bacillus stearothermophilus) protein is Putative transposase for insertion sequence element IS5376.